The primary structure comprises 319 residues: uncharacterized protein (319 aa).

Residues 1 to 27 (MYKKFVPFAVFLFLFFVSFEMMENPHA) form the signal peptide. A NodB homology domain is found at 130 to 306 (PMVAFLINVA…QIKDKGYALG (177 aa)).

This sequence belongs to the polysaccharide deacetylase family.

This is an uncharacterized protein from Bacillus subtilis (strain 168).